Consider the following 298-residue polypeptide: Inosose dehydratase (298 aa).

Belongs to the IolE/MocC family. Requires glutathione as cofactor. It depends on Co(2+) as a cofactor. Mn(2+) is required as a cofactor.

It carries out the reaction scyllo-inosose = 3D-3,5/4-trihydroxycyclohexane-1,2-dione + H2O. It functions in the pathway polyol metabolism; myo-inositol degradation into acetyl-CoA; acetyl-CoA from myo-inositol: step 2/7. Functionally, catalyzes the dehydration of inosose (2-keto-myo-inositol, 2KMI or 2,4,6/3,5-pentahydroxycyclohexanone) to 3D-(3,5/4)-trihydroxycyclohexane-1,2-dione (D-2,3-diketo-4-deoxy-epi-inositol). This is Inosose dehydratase from Clostridium botulinum (strain Alaska E43 / Type E3).